The sequence spans 957 residues: Bifunctional glutamine synthetase adenylyltransferase/adenylyl-removing enzyme (957 aa).

Positions 1 to 447 (MFSQLDFTGL…IFNQLIGEEE (447 aa)) are adenylyl removase. The adenylyl transferase stretch occupies residues 454–957 (VNEQLAIWQD…IWQQIFTDNE (504 aa)).

This sequence belongs to the GlnE family. Mg(2+) is required as a cofactor.

It carries out the reaction [glutamine synthetase]-O(4)-(5'-adenylyl)-L-tyrosine + phosphate = [glutamine synthetase]-L-tyrosine + ADP. The catalysed reaction is [glutamine synthetase]-L-tyrosine + ATP = [glutamine synthetase]-O(4)-(5'-adenylyl)-L-tyrosine + diphosphate. Its function is as follows. Involved in the regulation of glutamine synthetase GlnA, a key enzyme in the process to assimilate ammonia. When cellular nitrogen levels are high, the C-terminal adenylyl transferase (AT) inactivates GlnA by covalent transfer of an adenylyl group from ATP to specific tyrosine residue of GlnA, thus reducing its activity. Conversely, when nitrogen levels are low, the N-terminal adenylyl removase (AR) activates GlnA by removing the adenylyl group by phosphorolysis, increasing its activity. The regulatory region of GlnE binds the signal transduction protein PII (GlnB) which indicates the nitrogen status of the cell. The polypeptide is Bifunctional glutamine synthetase adenylyltransferase/adenylyl-removing enzyme (Haemophilus ducreyi (strain 35000HP / ATCC 700724)).